The chain runs to 231 residues: Uracil phosphoribosyltransferase (231 aa).

38-42 provides a ligand contact to GTP; it reads KGLVR. 5-phospho-alpha-D-ribose 1-diphosphate is bound by residues Arg87, Arg112, and 140 to 148; that span reads DPMIATGST. Uracil-binding positions include Ile203 and 208–210; that span reads GDA. Residue Asp209 participates in 5-phospho-alpha-D-ribose 1-diphosphate binding.

The protein belongs to the UPRTase family. It depends on Mg(2+) as a cofactor.

The catalysed reaction is UMP + diphosphate = 5-phospho-alpha-D-ribose 1-diphosphate + uracil. It participates in pyrimidine metabolism; UMP biosynthesis via salvage pathway; UMP from uracil: step 1/1. Allosterically activated by GTP. In terms of biological role, catalyzes the conversion of uracil and 5-phospho-alpha-D-ribose 1-diphosphate (PRPP) to UMP and diphosphate. The protein is Uracil phosphoribosyltransferase of Methanococcus maripaludis (strain C7 / ATCC BAA-1331).